A 1013-amino-acid polypeptide reads, in one-letter code: Receptor-type tyrosine-protein phosphatase N2 (1013 aa).

The first 19 residues, 1–19 (MALPLLLLLLLLLPPRVLP), serve as a signal peptide directing secretion. The involved in localization to secretory granules; interaction with CPE stretch occupies residues 1–419 (MALPLLLLLL…PGALPFAKPL (419 aa)). Over 20-613 (AAPSSVPHGR…QAEQEDSTKF (594 aa)) the chain is Extracellular. Disordered regions lie at residues 116 to 137 (RHPE…ERRY), 273 to 302 (MPRP…TGEG), 342 to 382 (DHRG…VQDD), and 401 to 487 (LQDH…SLPA). Residues 419-430 (LKMERKKSERPE) are compositionally biased toward basic and acidic residues. 2 positions are modified to phosphoserine: S434 and S435. N-linked (GlcNAc...) asparagine glycosylation is present at N562. The helical transmembrane segment at 614-634 (IALTLVSLACILGVLLASGLI) threads the bilayer. Topologically, residues 635–1013 (YCLRHSSQHR…VNAILKALPQ (379 aa)) are cytoplasmic. The short motif at 664–673 (YQELCRQRMA) is the Tyrosine-based internalization motif element. The disordered stretch occupies residues 673 to 717 (ATRPPDRPEGPHTSRISSVSSQFSDGPMPSPSARSSASSWSEEPV). Residues 686–696 (SRISSVSSQFS) show a composition bias toward polar residues. S690 and S696 each carry phosphoserine. The segment covering 703–717 (PSARSSASSWSEEPV) has biased composition (low complexity). The region spanning 743–1003 (LEKEWEALCA…EFALTAVAEE (261 aa)) is the Tyrosine-protein phosphatase domain. Substrate contacts are provided by residues D911 and 943–949 (CSDGAGR). The Phosphocysteine intermediate role is filled by C943. K968 carries the N6-acetyllysine modification. Substrate is bound at residue Q988. The short motif at 1002–1008 (EEVNAIL) is the Leucine-based sorting signal element.

Belongs to the protein-tyrosine phosphatase family. Receptor class 8 subfamily. As to quaternary structure, self-associates. Interacts (via cytoplasmic domain) with PTPRN (via cytoplasmic domain). Interacts (precursor form) with CPE. Interacts with HAP1. Interacts with AP2A1 or AP2A2 and AP1G1; indicative for an association with adaptor protein complex 2 (AP-2) and adaptor protein complex 1 (AP-1). Interacts with AP2M1; indicative for an association with adaptor protein complex 2 (AP-2). Interacts with MYO5A. Subject to proteolytic cleavage at multiple sites. Detected in pancreatic islets and adrenal medulla.

The protein resides in the cytoplasmic vesicle. It is found in the secretory vesicle membrane. Its subcellular location is the secretory vesicle. It localises to the synaptic vesicle membrane. It carries out the reaction O-phospho-L-tyrosyl-[protein] + H2O = L-tyrosyl-[protein] + phosphate. Functionally, plays a role in vesicle-mediated secretory processes. Required for normal accumulation of secretory vesicles in hippocampus, pituitary and pancreatic islets. Required for the accumulation of normal levels of insulin-containing vesicles and preventing their degradation. Plays a role in insulin secretion in response to glucose stimuli. Required for normal accumulation of the neurotransmitters norepinephrine, dopamine and serotonin in the brain. In females, but not in males, required for normal accumulation and secretion of pituitary hormones, such as luteinizing hormone (LH) and follicle-stimulating hormone (FSH). Required to maintain normal levels of renin expression and renin release. May regulate catalytic active protein-tyrosine phosphatases such as PTPRA through dimerization. Has phosphatidylinositol phosphatase activity; the PIPase activity is involved in its ability to regulate insulin secretion. Can dephosphorylate phosphatidylinositol 4,5-biphosphate, phosphatidylinositol 5-phosphate and phosphatidylinositol 3-phosphate. Regulates PI(4,5)P2 level in the plasma membrane and localization of cofilin at the plasma membrane and thus is indirectly involved in regulation of actin dynamics related to cell migration and metastasis; upon hydrolysis of PI(4,5)P2 cofilin is released from the plasma membrane and acts in the cytoplasm in severing F-actin filaments. This is Receptor-type tyrosine-protein phosphatase N2 (PTPRN2) from Macaca nemestrina (Pig-tailed macaque).